Here is a 637-residue protein sequence, read N- to C-terminus: Penicillin-binding protein 1A (637 aa).

The transglycosylase stretch occupies residues 62–224 (LIADLGSERR…NQYDPYSHPE (163 aa)). The Proton donor; for transglycosylase activity role is filled by Glu-91. A transpeptidase region spans residues 298 to 612 (EVYTNVDSKV…RLTPIVGDGF (315 aa)). The active-site Acyl-ester intermediate; for transpeptidase activity is Ser-371.

It in the N-terminal section; belongs to the glycosyltransferase 51 family. This sequence in the C-terminal section; belongs to the transpeptidase family.

It localises to the secreted. The enzyme catalyses [GlcNAc-(1-&gt;4)-Mur2Ac(oyl-L-Ala-gamma-D-Glu-L-Lys-D-Ala-D-Ala)](n)-di-trans,octa-cis-undecaprenyl diphosphate + beta-D-GlcNAc-(1-&gt;4)-Mur2Ac(oyl-L-Ala-gamma-D-Glu-L-Lys-D-Ala-D-Ala)-di-trans,octa-cis-undecaprenyl diphosphate = [GlcNAc-(1-&gt;4)-Mur2Ac(oyl-L-Ala-gamma-D-Glu-L-Lys-D-Ala-D-Ala)](n+1)-di-trans,octa-cis-undecaprenyl diphosphate + di-trans,octa-cis-undecaprenyl diphosphate + H(+). It carries out the reaction Preferential cleavage: (Ac)2-L-Lys-D-Ala-|-D-Ala. Also transpeptidation of peptidyl-alanyl moieties that are N-acyl substituents of D-alanine.. The protein operates within cell wall biogenesis; peptidoglycan biosynthesis. Cell wall formation. In Streptococcus oralis, this protein is Penicillin-binding protein 1A (ponA).